Reading from the N-terminus, the 327-residue chain is uncharacterized protein (327 aa).

Residues 12 to 31 form a disordered region; it reads PLGTTKSYHMNTSTVSPPSP. Transmembrane regions (helical) follow at residues 183–203 and 292–312; these read VSSPSVEVYIAGCCGGVPVIL and VGVGIGLGMCLGVGIGVGLLM.

It localises to the membrane. This is an uncharacterized protein from Arabidopsis thaliana (Mouse-ear cress).